Here is a 177-residue protein sequence, read N- to C-terminus: Peptide methionine sulfoxide reductase MsrA 2 (177 aa).

C12 is an active-site residue.

It belongs to the MsrA Met sulfoxide reductase family.

It catalyses the reaction L-methionyl-[protein] + [thioredoxin]-disulfide + H2O = L-methionyl-(S)-S-oxide-[protein] + [thioredoxin]-dithiol. The catalysed reaction is [thioredoxin]-disulfide + L-methionine + H2O = L-methionine (S)-S-oxide + [thioredoxin]-dithiol. In terms of biological role, has an important function as a repair enzyme for proteins that have been inactivated by oxidation. Catalyzes the reversible oxidation-reduction of methionine sulfoxide in proteins to methionine. The protein is Peptide methionine sulfoxide reductase MsrA 2 (msrA2) of Staphylococcus aureus (strain NCTC 8325 / PS 47).